The chain runs to 94 residues: Myosuppressin (94 aa).

A signal peptide spans 1–24 (MMSPTLMILISITTMAILSGESFG). Positions 25–80 (AMPAQCNSEFLEELPPRLRKICVAIARIWDAREMNDFVDDREYRENLPRYDSSVKR) are excised as a propeptide. Q81 carries the post-translational modification Pyrrolidone carboxylic acid. F90 is modified (phenylalanine amide).

In terms of tissue distribution, expressed throughout the nervous system (at protein level).

Its subcellular location is the secreted. Functionally, myoinhibiting neuropeptide. The sequence is that of Myosuppressin from Camponotus floridanus (Florida carpenter ant).